The following is a 277-amino-acid chain: UPF0496 protein At3g48650 (277 aa).

Transmembrane regions (helical) follow at residues 124–144 (YIFFAAALLSVLALWIYLGAV) and 145–165 (SLVVAAKVVIEVATPSIAPLW).

This sequence belongs to the UPF0496 family.

The protein localises to the membrane. The polypeptide is UPF0496 protein At3g48650 (Arabidopsis thaliana (Mouse-ear cress)).